Consider the following 38-residue polypeptide: Photosystem II reaction center protein L (38 aa).

A helical transmembrane segment spans residues 17–37; that stretch reads SLYWGLLLIFVLAVPFSNYFF.

It belongs to the PsbL family. PSII is composed of 1 copy each of membrane proteins PsbA, PsbB, PsbC, PsbD, PsbE, PsbF, PsbH, PsbI, PsbJ, PsbK, PsbL, PsbM, PsbT, PsbX, PsbY, PsbZ, Psb30/Ycf12, at least 3 peripheral proteins of the oxygen-evolving complex and a large number of cofactors. It forms dimeric complexes.

Its subcellular location is the plastid. It localises to the chloroplast thylakoid membrane. Its function is as follows. One of the components of the core complex of photosystem II (PSII). PSII is a light-driven water:plastoquinone oxidoreductase that uses light energy to abstract electrons from H(2)O, generating O(2) and a proton gradient subsequently used for ATP formation. It consists of a core antenna complex that captures photons, and an electron transfer chain that converts photonic excitation into a charge separation. This subunit is found at the monomer-monomer interface and is required for correct PSII assembly and/or dimerization. The chain is Photosystem II reaction center protein L from Pinus thunbergii (Japanese black pine).